The following is a 167-amino-acid chain: Acetolactate synthase small subunit (167 aa).

An ACT domain is found at threonine 7 to aspartate 81.

It belongs to the acetolactate synthase small subunit family. As to quaternary structure, dimer of large and small chains.

The catalysed reaction is 2 pyruvate + H(+) = (2S)-2-acetolactate + CO2. Its pathway is amino-acid biosynthesis; L-isoleucine biosynthesis; L-isoleucine from 2-oxobutanoate: step 1/4. It participates in amino-acid biosynthesis; L-valine biosynthesis; L-valine from pyruvate: step 1/4. The polypeptide is Acetolactate synthase small subunit (ilvH) (Mycobacterium avium).